The chain runs to 504 residues: Procardosin-A (504 aa).

The N-terminal stretch at 1-24 is a signal peptide; sequence MGTSIKANVLALFLFYLLSPTVFS. Residues 25–68 constitute a propeptide that is removed on maturation; that stretch reads VSDDGLIRIGLKKRKVDRIDQLRGRRALMEGNARKDFGFRGTVR. The 417-residue stretch at 85–501 folds into the Peptidase A1 domain; the sequence is YFGEIGIGTP…DYGNLLVGFA (417 aa). Residue aspartate 103 is part of the active site. Cysteine 116 and cysteine 122 are disulfide-bonded. A glycan (N-linked (GlcNAc...) asparagine) is linked at asparagine 139. The short motif at 246–248 is the RGD motif element; it reads RGD. The cysteines at positions 277 and 281 are disulfide-linked. The active site involves aspartate 286. Positions 310 to 414 are cleaved as a propeptide — plant-specific insert; sequence GVMNQQCKTV…YANELCEHLS (105 aa). The Saposin B-type domain occupies 311-416; it reads VMNQQCKTVV…NELCEHLSTS (106 aa). 4 cysteine pairs are disulfide-bonded: cysteine 316–cysteine 410, cysteine 341–cysteine 382, cysteine 347–cysteine 379, and cysteine 424–cysteine 461. N-linked (GlcNAc...) asparagine glycosylation occurs at asparagine 432. The KGE motif motif lies at 455-457; the sequence is KGE.

This sequence belongs to the peptidase A1 family. Heterodimer of a light chain and a heavy chain. An intermediate form (35 kDa and 30 kDa subunits) is produced first, and undergoes proteolytic processing to remove the internal plant-specific insert (PSI) and the propeptide. There is some heterogeniety at the cleavage site. Interacts (via RGD or KGE motifs) with PLD1 (via C2 domain). N-glycosylated. Glycans found at Asn-139 include approximately 6% oligomannose, 82% oligosaccharides of the plant modified type with proximal fucose but without xylose and 6% oligosaccharides of the plant modified type with proximal fucose and xylose. Glycans found at Asn-432 include 14% oligosaccharides of the plant modified type with proximal fucose but without xylose and 86% oligosaccharides of the plant modified type with proximal fucose and xylose. As to expression, detected only in pistils, not in seeds, roots, midribs, bracts, stamens, pollen, vascular or supporting tissues. Detected in seeds. High amounts are detected in the broad outer region of the upper portion of the stigma, towards the lower portion of the stigma it accumulates at the periphery. Within the stigma, expressed mainly in the epidermic papillae, lower levels are found in the cortical parenchyma. Present mainly in epidermal cells within the stye (at protein level). Expressed in young flower buds, and at lower levels in seeds, pollen and bracteas, but not in roots or leaves.

Its subcellular location is the microsome membrane. It is found in the protein storage vacuole. The protein resides in the secreted. It localises to the cell wall. The protein localises to the extracellular space. Its subcellular location is the extracellular matrix. With respect to regulation, inhibited by the specific aspartic proteinase inhibitors diazoacetyl-noleucine methyl ester and pepstatin. Its function is as follows. Aspartic proteinase with a high preference for bonds between hydrophobic residues. Cleaves alpha-lactalbumin but not beta-lactoglobulin. This chain is Procardosin-A, found in Cynara cardunculus (Cardoon).